Consider the following 374-residue polypeptide: All-trans-retinol dehydrogenase [NAD(+)] ADH7 (374 aa).

Positions 47, 68, 98, 101, 104, 112, and 174 each coordinate Zn(2+). NAD(+)-binding positions include 199–204, Asp-223, Lys-228, 292–294, and Arg-369; these read GLGGVG and VGA.

The protein belongs to the zinc-containing alcohol dehydrogenase family. Class-IV subfamily. As to quaternary structure, homodimer. Zn(2+) is required as a cofactor. High expression in the stomach mucosa. Lower expression in eye, thymus, skin and ovary. Very low expression in small intestine, liver and uterus.

The protein localises to the cytoplasm. The catalysed reaction is a primary alcohol + NAD(+) = an aldehyde + NADH + H(+). The enzyme catalyses 10-hydroxydecanoate + NAD(+) = 10-oxodecanoate + NADH + H(+). It catalyses the reaction all-trans-retinol + NAD(+) = all-trans-retinal + NADH + H(+). It carries out the reaction 9-cis-retinol + NAD(+) = 9-cis-retinal + NADH + H(+). The catalysed reaction is all-trans-3,4-didehydroretinol + NAD(+) = all-trans-3,4-didehydroretinal + NADH + H(+). The enzyme catalyses all-trans-4-hydroxyretinol + NAD(+) = all-trans-4-hydroxyretinal + NADH + H(+). It catalyses the reaction all-trans-4-oxoretinol + NAD(+) = all-trans-4-oxoretinal + NADH + H(+). It carries out the reaction 12-hydroxydodecanoate + NAD(+) = 12-oxododecanoate + NADH + H(+). The catalysed reaction is 16-hydroxyhexadecanoate + NAD(+) = 16-oxohexadecanoate + NADH + H(+). The enzyme catalyses hexan-1-ol + NAD(+) = hexanal + NADH + H(+). It catalyses the reaction (E)-hex-2-en-1-ol + NAD(+) = (E)-hex-2-enal + NADH + H(+). It carries out the reaction (E)-4-hydroxynon-2-en-1-ol + NAD(+) = (E)-4-hydroxynon-2-enal + NADH + H(+). Its activity is regulated as follows. Retinol oxidation is inhibited by the detergent Tween 80. Ethanol inhibits both all-trans-retinol and 9-cis-retinol oxidation. 13-cis-retinol is an effective competitive inhibitor of the 9-cis-retinol oxidation. All-trans-retinoic acid is a powerful inhibitor of all-trans-retinol oxidation. 13-cis-retinoic acid is a powerful inhibitor of all-trans-retinol oxidation. Cimetidine competitively inhibited ethanol oxidation. In terms of biological role, catalyzes the NAD-dependent oxidation of all-trans-retinol, alcohol, aldehyde and omega-hydroxy fatty acids and their derivatives. Oxidizes preferentially all trans-retinol, all-trans-4-hydroxyretinol, 9-cis-retinol, 2-hexenol, and long chain omega-hydroxy fatty acids such as juniperic acid. In vitro can also catalyze the NADH-dependent reduction of all-trans-retinal and aldehydes and their derivatives. Reduces preferentially all trans-retinal, all-trans-4-oxoretinal and hexanal. Catalyzes in the oxidative direction with higher efficiency. Therefore may participate in retinoid metabolism, fatty acid omega-oxidation, and elimination of cytotoxic aldehydes produced by lipid peroxidation. The sequence is that of All-trans-retinol dehydrogenase [NAD(+)] ADH7 (Adh7) from Mus musculus (Mouse).